The sequence spans 467 residues: Mitochondrial adenyl nucleotide antiporter SLC25A23 (467 aa).

The segment at 1–148 (MRGGSSDAER…DHFLLHSLEN (148 aa)) is regulatory N-terminal domain. Over 1-187 (MRGGSSDAER…EKLTGMWWKQ (187 aa)) the chain is Mitochondrial intermembrane. EF-hand domains follow at residues 9–44 (ERRQ…LGRG), 76–111 (EREQ…LGIS), and 112–147 (ISLE…HSLE). Ca(2+) contacts are provided by aspartate 22, asparagine 24, aspartate 26, arginine 28, and glutamate 33. The segment at 39–61 (ARLGRGDPDRAQQGVSSDWDADP) is disordered. The Ca(2+) site is built by aspartate 89, asparagine 91, aspartate 93, histidine 95, and glutamate 100. Residues 149 to 158 (VEDVLYFWKH) form a linker region region. Residues 164–467 (IGECLTVPDE…MKQALGVTSR (304 aa)) form a C-terminal transmembrane transporter domain region. Solcar repeat units lie at residues 182-268 (GMWW…IKRA), 276-361 (LHVQ…LKNR), and 373-461 (PGIL…MKQA). The chain crosses the membrane as a helical span at residues 188-205 (LVAGAVAGAVSRTGTAPL). Over 206 to 242 (DRLKVFMQVHASKSNRLNILGGLRNMIQEGGVLSLWR) the chain is Mitochondrial matrix. Residues 243 to 262 (GNGINVLKIAPESAIKFMAY) traverse the membrane as a helical segment. Over 263-285 (EQIKRAIRGQQETLHVQERFVAG) the chain is Mitochondrial intermembrane. The helical transmembrane segment at 286 to 299 (SLAGATAQTIIYPM) threads the bilayer. Over 300-335 (EVLKTRLTLRRTGQYKGLLDCAKRILEREGPRAFYR) the chain is Mitochondrial matrix. The chain crosses the membrane as a helical span at residues 336-355 (GYLPNVLGIIPYAGIDLAVY). The Mitochondrial intermembrane portion of the chain corresponds to 356–378 (ETLKNRWLQQYSHESANPGILVL). A helical transmembrane segment spans residues 379–396 (LGCGTISSTCGQIASYPL). Over 397-435 (ALVRTRMQAQASIEGGPQVSMVGLLRHILSQEGVWGLYR) the chain is Mitochondrial matrix. The helical transmembrane segment at 436 to 455 (GIAPNFMKVIPAVSISYVVY) threads the bilayer. At 456–467 (ENMKQALGVTSR) the chain is on the mitochondrial intermembrane side.

This sequence belongs to the mitochondrial carrier (TC 2.A.29) family. Interacts with MCU. Interacts with MICU1.

The protein localises to the mitochondrion inner membrane. It carries out the reaction Mg(2+)(out) + phosphate(in) + ATP(out) = Mg(2+)(in) + phosphate(out) + ATP(in). The enzyme catalyses ADP(out) + phosphate(in) + H(+)(out) = ADP(in) + phosphate(out) + H(+)(in). It catalyses the reaction AMP(out) + phosphate(in) = AMP(in) + phosphate(out). The catalysed reaction is phosphate(in) + ATP(out) + 2 H(+)(out) = phosphate(out) + ATP(in) + 2 H(+)(in). It carries out the reaction dADP(in) + ADP(out) = dADP(out) + ADP(in). The enzyme catalyses Mg(2+)(in) + ADP(out) + ATP(in) + H(+)(out) = Mg(2+)(out) + ADP(in) + ATP(out) + H(+)(in). It catalyses the reaction ADP(out) + diphosphate(in) = ADP(in) + diphosphate(out). The catalysed reaction is dAMP(in) + ADP(out) + H(+)(out) = dAMP(out) + ADP(in) + H(+)(in). It carries out the reaction 3'-AMP(in) + ADP(out) + H(+)(out) = 3'-AMP(out) + ADP(in) + H(+)(in). The enzyme catalyses dAMP(out) + phosphate(in) = dAMP(in) + phosphate(out). It catalyses the reaction 3'-AMP(out) + phosphate(in) = 3'-AMP(in) + phosphate(out). The catalysed reaction is dADP(out) + phosphate(in) + H(+)(out) = dADP(in) + phosphate(out) + H(+)(in). With respect to regulation, activated by an increase in cytosolic calcium levels that induce a conformational change of the N-terminal regulatory domain, uncapping the channel and allowing transport. Functionally, electroneutral antiporter that mediates the transport of adenine nucleotides through the inner mitochondrial membrane. Originally identified as an ATP-magnesium/inorganic phosphate antiporter, it also acts as a broad specificity adenyl nucleotide antiporter. By regulating the mitochondrial matrix adenine nucleotide pool could adapt to changing cellular energetic demands and indirectly regulate adenine nucleotide-dependent metabolic pathways. Also acts as a regulator of mitochondrial calcium uptake and can probably transport trace amounts of other divalent metal cations in complex with ATP. In vitro, a low activity is also observed with guanyl and pyrimidine nucleotides. This chain is Mitochondrial adenyl nucleotide antiporter SLC25A23, found in Mus musculus (Mouse).